A 391-amino-acid polypeptide reads, in one-letter code: 4-coumarate--CoA ligase (391 aa).

It belongs to the ATP-dependent AMP-binding enzyme family.

The catalysed reaction is (E)-4-coumarate + ATP + CoA = (E)-4-coumaroyl-CoA + AMP + diphosphate. In terms of biological role, converts p-coumaric acid into p-coumaryl CoA. This is necessary for the activation of the photoactive yellow protein (PYP) chromophore. This is 4-coumarate--CoA ligase (pcl) from Halorhodospira halophila (Ectothiorhodospira halophila).